The following is a 252-amino-acid chain: Carbohydrate deacetylase (252 aa).

2 residues coordinate Mg(2+): H59 and H122.

The protein belongs to the YdjC deacetylase family. As to quaternary structure, homodimer. The cofactor is Mg(2+).

Its function is as follows. Probably catalyzes the deacetylation of acetylated carbohydrates an important step in the degradation of oligosaccharides. The protein is Carbohydrate deacetylase of Vibrio cholerae serotype O1 (strain ATCC 39315 / El Tor Inaba N16961).